Reading from the N-terminus, the 272-residue chain is NH(3)-dependent NAD(+) synthetase (272 aa).

45 to 52 serves as a coordination point for ATP; the sequence is GISGGQDS. Asp-51 contributes to the Mg(2+) binding site. Residue Arg-138 coordinates deamido-NAD(+). Thr-158 is a binding site for ATP. A Mg(2+)-binding site is contributed by Glu-163. Residues Lys-171 and Asp-178 each coordinate deamido-NAD(+). ATP contacts are provided by Lys-187 and Thr-209. 258 to 259 provides a ligand contact to deamido-NAD(+); the sequence is HK.

This sequence belongs to the NAD synthetase family. In terms of assembly, homodimer.

The enzyme catalyses deamido-NAD(+) + NH4(+) + ATP = AMP + diphosphate + NAD(+) + H(+). It participates in cofactor biosynthesis; NAD(+) biosynthesis; NAD(+) from deamido-NAD(+) (ammonia route): step 1/1. Catalyzes the ATP-dependent amidation of deamido-NAD to form NAD. Uses ammonia as a nitrogen source. This Bacillus cereus (strain ATCC 14579 / DSM 31 / CCUG 7414 / JCM 2152 / NBRC 15305 / NCIMB 9373 / NCTC 2599 / NRRL B-3711) protein is NH(3)-dependent NAD(+) synthetase.